The sequence spans 201 residues: Translation initiation factor IF-3 (201 aa).

The tract at residues T170–E201 is disordered. A compositionally biased stretch (polar residues) spans P182–S195.

This sequence belongs to the IF-3 family. Monomer.

It is found in the cytoplasm. In terms of biological role, IF-3 binds to the 30S ribosomal subunit and shifts the equilibrium between 70S ribosomes and their 50S and 30S subunits in favor of the free subunits, thus enhancing the availability of 30S subunits on which protein synthesis initiation begins. In Porphyromonas gingivalis (strain ATCC BAA-308 / W83), this protein is Translation initiation factor IF-3.